The sequence spans 450 residues: Probable ATP-dependent RNA helicase MG425 homolog (450 aa).

Residues 3 to 31 (STFNELGVSPALIATLKDNNINQPTTIQQ) carry the Q motif motif. In terms of domain architecture, Helicase ATP-binding spans 34–206 (IPQFLQHQNL…KQITKNGIFL (173 aa)). 47 to 54 (SPTGTGKT) is a binding site for ATP. Positions 154 to 157 (DEVD) match the DEVD box motif. The 151-residue stretch at 234–384 (RKKQALYSLV…PLRPMRLRLI (151 aa)) folds into the Helicase C-terminal domain. A disordered region spans residues 429-450 (MRQPERDMQKNKLHDSDWQSNM). Positions 430–450 (RQPERDMQKNKLHDSDWQSNM) are enriched in basic and acidic residues.

This sequence belongs to the DEAD box helicase family.

It catalyses the reaction ATP + H2O = ADP + phosphate + H(+). The protein is Probable ATP-dependent RNA helicase MG425 homolog of Mycoplasma pneumoniae (strain ATCC 29342 / M129 / Subtype 1) (Mycoplasmoides pneumoniae).